A 911-amino-acid polypeptide reads, in one-letter code: SH3 and PX domain-containing protein 2B (911 aa).

The 125-residue stretch at 5–129 (RSIVEVKVLD…QFFETRPEDL (125 aa)) folds into the PX domain. Y25 carries the post-translational modification Phosphotyrosine. SH3 domains are found at residues 152 to 211 (MVLE…GQDG) and 221 to 280 (EEEE…KNSG). Residues 275–366 (LKKNSGEPLP…GLNLPKPPIP (92 aa)) are disordered. 2 positions are modified to phosphoserine: S279 and S291. The segment covering 282-292 (PLPPKPGPGSP) has biased composition (pro residues). Positions 311–337 (GREKELLSSQRDGRFEGRPVPDGDAKQ) are enriched in basic and acidic residues. Residues 338-347 (RSPKMRQRPP) are compositionally biased toward basic residues. In terms of domain architecture, SH3 3 spans 368 to 427 (QVEEEYYTIAEFQTTIPDGISFQAGLKVEVIEKNLSGWWYIQIEDKEGWAPATFIDKYKK). Positions 458 to 834 (NTGSEATGPS…GPWGTGKIGE (377 aa)) are disordered. Composition is skewed to basic and acidic residues over residues 486-499 (KDWK…RKAS), 517-548 (EEKP…RTEQ), 571-586 (PARD…DKSR), 598-609 (CGHKVLAKEVKK), and 618-628 (SKTDLPEEKPD). 2 positions are modified to phosphoserine: S499 and S528. Pro residues-rich tracts occupy residues 643–653 (RPKPAPSPKTE) and 756–766 (VVPPRRPPPPK). Positions 822-831 (GSLGPWGTGK) are enriched in gly residues. Phosphoserine is present on S843. An SH3 4 domain is found at 850–911 (LKDSLYVAVA…IPSNYLRKKP (62 aa)).

Belongs to the SH3PXD2 family. In terms of assembly, interacts with ADAM15. Interacts with NOXO1. Interacts (via SH3 domains) with NOXA1; the interaction is direct. Interacts with FASLG. Phosphorylated in SRC-transformed cells. In terms of tissue distribution, expressed in fibroblasts.

The protein localises to the cytoplasm. It localises to the cell projection. It is found in the podosome. In terms of biological role, adapter protein involved in invadopodia and podosome formation and extracellular matrix degradation. Binds matrix metalloproteinases (ADAMs), NADPH oxidases (NOXs) and phosphoinositides. Acts as an organizer protein that allows NOX1- or NOX3-dependent reactive oxygen species (ROS) generation and ROS localization. Plays a role in mitotic clonal expansion during the immediate early stage of adipocyte differentiation. The protein is SH3 and PX domain-containing protein 2B (SH3PXD2B) of Homo sapiens (Human).